Here is a 334-residue protein sequence, read N- to C-terminus: Glycerol-3-phosphate dehydrogenase [NAD(P)+] (334 aa).

Residues tryptophan 13, arginine 33, and lysine 106 each contribute to the NADPH site. 3 residues coordinate sn-glycerol 3-phosphate: lysine 106, glycine 137, and serine 139. NADPH is bound at residue alanine 141. Sn-glycerol 3-phosphate-binding residues include lysine 192, aspartate 245, serine 255, arginine 256, and asparagine 257. The active-site Proton acceptor is the lysine 192. Arginine 256 is an NADPH binding site. 2 residues coordinate NADPH: valine 280 and glutamate 282.

It belongs to the NAD-dependent glycerol-3-phosphate dehydrogenase family.

It localises to the cytoplasm. The catalysed reaction is sn-glycerol 3-phosphate + NAD(+) = dihydroxyacetone phosphate + NADH + H(+). It carries out the reaction sn-glycerol 3-phosphate + NADP(+) = dihydroxyacetone phosphate + NADPH + H(+). It participates in membrane lipid metabolism; glycerophospholipid metabolism. In terms of biological role, catalyzes the reduction of the glycolytic intermediate dihydroxyacetone phosphate (DHAP) to sn-glycerol 3-phosphate (G3P), the key precursor for phospholipid synthesis. The chain is Glycerol-3-phosphate dehydrogenase [NAD(P)+] from Chlamydia trachomatis serovar L2 (strain ATCC VR-902B / DSM 19102 / 434/Bu).